The primary structure comprises 238 residues: Ribitol-5-phosphate cytidylyltransferase (238 aa).

Residues 7 to 10 (LAGG) and 81 to 87 (GSDRNET) contribute to the CTP site.

The protein belongs to the IspD/TarI cytidylyltransferase family. TarI subfamily.

It carries out the reaction D-ribitol 5-phosphate + CTP + H(+) = CDP-L-ribitol + diphosphate. It participates in cell wall biogenesis; poly(ribitol phosphate) teichoic acid biosynthesis. Functionally, catalyzes the transfer of the cytidylyl group of CTP to D-ribitol 5-phosphate. This Staphylococcus saprophyticus subsp. saprophyticus (strain ATCC 15305 / DSM 20229 / NCIMB 8711 / NCTC 7292 / S-41) protein is Ribitol-5-phosphate cytidylyltransferase.